Consider the following 323-residue polypeptide: Caspase-1 (323 aa).

Residues methionine 1 to aspartate 33 constitute a propeptide that is removed on maturation. Catalysis depends on residues histidine 154 and cysteine 196. A propeptide spanning residues glycine 203–aspartate 215 is cleaved from the precursor.

This sequence belongs to the peptidase C14A family. As to quaternary structure, heterotetramer that consists of two anti-parallel arranged heterodimers, each one formed by a 22 kDa (p22) and a 13 kDa (p13) subunit.

Its function is as follows. Involved in the activation cascade of caspases responsible for apoptosis execution. Proteolytically cleaves poly(ADP-ribose) polymerase (PARP). Loss of zygotic DCP-1 function causes larval lethality and melanotic tumors. The sequence is that of Caspase-1 (Dcp-1) from Drosophila melanogaster (Fruit fly).